The chain runs to 230 residues: Cytidylate kinase (230 aa).

Residue 10 to 18 participates in ATP binding; the sequence is GPAGSGKST.

The protein belongs to the cytidylate kinase family. Type 1 subfamily.

The protein resides in the cytoplasm. It catalyses the reaction CMP + ATP = CDP + ADP. The enzyme catalyses dCMP + ATP = dCDP + ADP. The protein is Cytidylate kinase of Leptospira borgpetersenii serovar Hardjo-bovis (strain JB197).